We begin with the raw amino-acid sequence, 260 residues long: Dehydrogenase/reductase SDR family member 4 (260 aa).

14-38 (IVTAATKGIGLAIAERLLDEGASVV) lines the NADP(+) pocket. Serine 148 is a substrate binding site. Tyrosine 161 (proton acceptor) is an active-site residue. NADP(+) is bound at residue lysine 165.

It belongs to the short-chain dehydrogenases/reductases (SDR) family.

The catalysed reaction is a secondary alcohol + NADP(+) = a ketone + NADPH + H(+). In terms of biological role, catalyzes the reduction of isatin, 4-oxonon-2-enal, 9,10-phenanthrenequinone, menadione, 2,3-hexaenadione, 3,4-hexanedione and 2,3-heptanedione. The polypeptide is Dehydrogenase/reductase SDR family member 4 (Caenorhabditis elegans).